We begin with the raw amino-acid sequence, 263 residues long: Proliferating cell nuclear antigen (263 aa).

A DNA-binding region spans residues 61-80; it reads RCDRNLSMGMNLNNMAKMLR.

Belongs to the PCNA family. As to quaternary structure, homotrimer. Interacts with FEN1A. Interacts with POLL. Interacts with RAD/GEN1. Interacts with DJA7 and DJA8. In terms of tissue distribution, expressed in proliferating tissues. Expressed in roots and root apex. Expressed at low levels in young leaves. Not detected in mature leaves. Highly expressed in shoot apical meristem (SAM). Expressed in flag leaves and panicles.

The protein localises to the nucleus. In terms of biological role, this protein is an auxiliary protein of DNA polymerase delta and is involved in the control of eukaryotic DNA replication by increasing the polymerase's processibility during elongation of the leading strand. The protein is Proliferating cell nuclear antigen of Oryza sativa subsp. japonica (Rice).